Consider the following 137-residue polypeptide: Large ribosomal subunit protein uL16 (137 aa).

Belongs to the universal ribosomal protein uL16 family. As to quaternary structure, part of the 50S ribosomal subunit.

In terms of biological role, binds 23S rRNA and is also seen to make contacts with the A and possibly P site tRNAs. This Bradyrhizobium sp. (strain ORS 278) protein is Large ribosomal subunit protein uL16.